The sequence spans 156 residues: Cytochrome c-type biogenesis protein CcmE (156 aa).

Over 1-7 the chain is Cytoplasmic; sequence MTRRQRR. The helical; Signal-anchor for type II membrane protein transmembrane segment at 8-28 threads the bilayer; sequence LGILLAALVCAGAATALTLNA. The Periplasmic portion of the chain corresponds to 29-156; the sequence is FRSNLVFFFS…AKESARSASR (128 aa). Heme-binding residues include His123 and Tyr127.

This sequence belongs to the CcmE/CycJ family.

Its subcellular location is the cell inner membrane. Functionally, heme chaperone required for the biogenesis of c-type cytochromes. Transiently binds heme delivered by CcmC and transfers the heme to apo-cytochromes in a process facilitated by CcmF and CcmH. The sequence is that of Cytochrome c-type biogenesis protein CcmE from Ralstonia pickettii (strain 12J).